The primary structure comprises 387 residues: Flap endonuclease 1 (387 aa).

The N-domain stretch occupies residues 1-104; that stretch reads MGIKGLSQLI…GELEKRKERQ (104 aa). Aspartate 34 lines the Mg(2+) pocket. Residue arginine 70 participates in DNA binding. Residues aspartate 86, glutamate 158, glutamate 160, aspartate 179, and aspartate 181 each contribute to the Mg(2+) site. The segment at 122–253 is I-domain; sequence KMVMWNKRTT…KKALAMIKKY (132 aa). A DNA-binding site is contributed by glutamate 158. The DNA site is built by glycine 231 and aspartate 233. Aspartate 233 is a binding site for Mg(2+). A disordered region spans residues 332–387; the sequence is SSRGKPTQTRLDGFFTPVASSSTTKKKAPAKKDDKKSATDKKRKAADASTSSKKKK. Positions 338–346 are interaction with PCNA; the sequence is TQTRLDGFF. The span at 361–371 shows a compositional bias: basic and acidic residues; the sequence is AKKDDKKSATD. Positions 378–387 are enriched in low complexity; sequence DASTSSKKKK.

The protein belongs to the XPG/RAD2 endonuclease family. FEN1 subfamily. As to quaternary structure, interacts with PCNA. Three molecules of FEN1 bind to one PCNA trimer with each molecule binding to one PCNA monomer. PCNA stimulates the nuclease activity without altering cleavage specificity. The cofactor is Mg(2+). In terms of processing, phosphorylated. Phosphorylation upon DNA damage induces relocalization to the nuclear plasma.

The protein localises to the nucleus. It localises to the nucleolus. Its subcellular location is the nucleoplasm. The protein resides in the mitochondrion. Functionally, structure-specific nuclease with 5'-flap endonuclease and 5'-3' exonuclease activities involved in DNA replication and repair. During DNA replication, cleaves the 5'-overhanging flap structure that is generated by displacement synthesis when DNA polymerase encounters the 5'-end of a downstream Okazaki fragment. It enters the flap from the 5'-end and then tracks to cleave the flap base, leaving a nick for ligation. Also involved in the long patch base excision repair (LP-BER) pathway, by cleaving within the apurinic/apyrimidinic (AP) site-terminated flap. Acts as a genome stabilization factor that prevents flaps from equilibrating into structures that lead to duplications and deletions. Also possesses 5'-3' exonuclease activity on nicked or gapped double-stranded DNA, and exhibits RNase H activity. Also involved in replication and repair of rDNA and in repairing mitochondrial DNA. This Naegleria gruberi (Amoeba) protein is Flap endonuclease 1.